A 229-amino-acid polypeptide reads, in one-letter code: Phosphoglycolate phosphatase (229 aa).

Aspartate 18 (nucleophile) is an active-site residue. Mg(2+) is bound by residues aspartate 18, aspartate 20, and aspartate 176.

It belongs to the HAD-like hydrolase superfamily. CbbY/CbbZ/Gph/YieH family. Mg(2+) is required as a cofactor.

It carries out the reaction 2-phosphoglycolate + H2O = glycolate + phosphate. It functions in the pathway organic acid metabolism; glycolate biosynthesis; glycolate from 2-phosphoglycolate: step 1/1. Functionally, specifically catalyzes the dephosphorylation of 2-phosphoglycolate. Is involved in the dissimilation of the intracellular 2-phosphoglycolate formed during the DNA repair of 3'-phosphoglycolate ends, a major class of DNA lesions induced by oxidative stress. The polypeptide is Phosphoglycolate phosphatase (Xylella fastidiosa (strain 9a5c)).